Here is a 674-residue protein sequence, read N- to C-terminus: Tripartite terminase subunit 3 (674 aa).

A Walker A motif motif is present at residues 212–219 (VPRRHGKT). A Walker B motif motif is present at residues 305-310 (LLLVDE). The active-site For ATPase activity is the Glu-310. Residues Asp-463 and Glu-534 each act as for nuclease activity in the active site. Residues 580-600 (GRDKALAVEQFISRFNSGYIK) are required for interaction with UL56 and DNA packaging. The active-site For nuclease activity is Asp-651.

It belongs to the herpesviridae TRM3 protein family. As to quaternary structure, interacts with the terminase subunits TRM1 and TRM2. Interacts with portal protein.

Its subcellular location is the host nucleus. Functionally, component of the molecular motor that translocates viral genomic DNA in empty capsid during DNA packaging. Forms a tripartite terminase complex together with TRM1 and TRM2 in the host cytoplasm. Once the complex reaches the host nucleus, it interacts with the capsid portal vertex. This portal forms a ring in which genomic DNA is translocated into the capsid. TRM3 carries an RNase H-like nuclease activity that plays an important role for the cleavage of concatemeric viral DNA into unit length genomes. The chain is Tripartite terminase subunit 3 from Homo sapiens (Human).